The sequence spans 128 residues: Ribonuclease pancreatic (128 aa).

The interval 1-23 (AESSAMKFQRQHVDSEGSSSSNA) is disordered. Positions 7 and 10 each coordinate substrate. The Proton acceptor role is filled by H12. 4 cysteine pairs are disulfide-bonded: C26-C84, C40-C95, C58-C110, and C65-C72. Substrate is bound by residues 41 to 45 (KPVNT), K66, and R85. H119 acts as the Proton donor in catalysis.

This sequence belongs to the pancreatic ribonuclease family. In terms of assembly, monomer. Interacts with and forms tight 1:1 complexes with RNH1. Dimerization of two such complexes may occur. Interaction with RNH1 inhibits this protein. In terms of tissue distribution, pancreas.

The protein resides in the secreted. It catalyses the reaction an [RNA] containing cytidine + H2O = an [RNA]-3'-cytidine-3'-phosphate + a 5'-hydroxy-ribonucleotide-3'-[RNA].. It carries out the reaction an [RNA] containing uridine + H2O = an [RNA]-3'-uridine-3'-phosphate + a 5'-hydroxy-ribonucleotide-3'-[RNA].. Its function is as follows. Endonuclease that catalyzes the cleavage of RNA on the 3' side of pyrimidine nucleotides. Acts on single-stranded and double-stranded RNA. The chain is Ribonuclease pancreatic (RNASE1) from Hydrochoerus hydrochaeris (Capybara).